The primary structure comprises 235 residues: Pyridoxine 5'-phosphate synthase (235 aa).

Asn6 is a binding site for 3-amino-2-oxopropyl phosphate. Asp8–His9 is a 1-deoxy-D-xylulose 5-phosphate binding site. Arg17 is a binding site for 3-amino-2-oxopropyl phosphate. His42 (proton acceptor) is an active-site residue. 1-deoxy-D-xylulose 5-phosphate is bound by residues Arg44 and His49. The active-site Proton acceptor is the Glu69. 1-deoxy-D-xylulose 5-phosphate is bound at residue Thr99. The Proton donor role is filled by His189. 3-amino-2-oxopropyl phosphate-binding positions include Gly190 and Gly211–His212.

The protein belongs to the PNP synthase family. In terms of assembly, homooctamer; tetramer of dimers.

It is found in the cytoplasm. The enzyme catalyses 3-amino-2-oxopropyl phosphate + 1-deoxy-D-xylulose 5-phosphate = pyridoxine 5'-phosphate + phosphate + 2 H2O + H(+). The protein operates within cofactor biosynthesis; pyridoxine 5'-phosphate biosynthesis; pyridoxine 5'-phosphate from D-erythrose 4-phosphate: step 5/5. Functionally, catalyzes the complicated ring closure reaction between the two acyclic compounds 1-deoxy-D-xylulose-5-phosphate (DXP) and 3-amino-2-oxopropyl phosphate (1-amino-acetone-3-phosphate or AAP) to form pyridoxine 5'-phosphate (PNP) and inorganic phosphate. The protein is Pyridoxine 5'-phosphate synthase of Chlorobium luteolum (strain DSM 273 / BCRC 81028 / 2530) (Pelodictyon luteolum).